A 514-amino-acid chain; its full sequence is Na(+)/H(+) antiporter NhaB (514 aa).

11 consecutive transmembrane segments (helical) span residues 21–41 (LAIV…SPFI), 43–63 (GWLL…CYPL), 88–108 (IMAN…IFFM), 143–163 (FLDA…FYGV), 203–223 (LMMH…VGEP), 239–259 (FFLR…LTCF), 304–324 (ALIA…VGLI), 349–369 (QESL…AVII), 390–410 (LALF…VFVA), 448–468 (ATPN…SPLI), and 484–504 (IVLS…ATIW).

The protein belongs to the NhaB Na(+)/H(+) (TC 2.A.34) antiporter family.

Its subcellular location is the cell inner membrane. The enzyme catalyses 2 Na(+)(in) + 3 H(+)(out) = 2 Na(+)(out) + 3 H(+)(in). Functionally, na(+)/H(+) antiporter that extrudes sodium in exchange for external protons. In Haemophilus influenzae (strain ATCC 51907 / DSM 11121 / KW20 / Rd), this protein is Na(+)/H(+) antiporter NhaB.